The sequence spans 150 residues: Large ribosomal subunit protein bL9 (150 aa).

The protein belongs to the bacterial ribosomal protein bL9 family.

Binds to the 23S rRNA. The polypeptide is Large ribosomal subunit protein bL9 (Latilactobacillus sakei subsp. sakei (strain 23K) (Lactobacillus sakei subsp. sakei)).